A 311-amino-acid chain; its full sequence is Probable manganese-dependent inorganic pyrophosphatase (311 aa).

The Mn(2+) site is built by H9, D13, D15, D77, H99, and D151.

Belongs to the PPase class C family. As to quaternary structure, homodimer. It depends on Mn(2+) as a cofactor.

The protein localises to the cytoplasm. It catalyses the reaction diphosphate + H2O = 2 phosphate + H(+). This chain is Probable manganese-dependent inorganic pyrophosphatase (ppaC), found in Streptococcus gordonii (strain Challis / ATCC 35105 / BCRC 15272 / CH1 / DL1 / V288).